A 268-amino-acid chain; its full sequence is Peptide transport system ATP-binding protein SapF (268 aa).

Residues 6-251 (LEVRNLSKTF…PLHELTKRLI (246 aa)) form the ABC transporter domain. Residue 47–54 (GENGSGKS) coordinates ATP.

It belongs to the ABC transporter superfamily.

The protein resides in the cell inner membrane. In terms of biological role, involved in a peptide intake transport system that plays a role in the resistance to antimicrobial peptides. In Escherichia coli O6:H1 (strain CFT073 / ATCC 700928 / UPEC), this protein is Peptide transport system ATP-binding protein SapF (sapF).